The sequence spans 719 residues: Polyribonucleotide nucleotidyltransferase (719 aa).

Residues aspartate 490 and aspartate 496 each coordinate Mg(2+). The 63-residue stretch at 557–619 folds into the KH domain; sequence PKIEIIIIPK…KSIDAALTRI (63 aa). Residues 629–699 enclose the S1 motif domain; the sequence is GEIYEGKIRS…KTGKFKLSHK (71 aa).

Belongs to the polyribonucleotide nucleotidyltransferase family. Mg(2+) is required as a cofactor.

Its subcellular location is the cytoplasm. The enzyme catalyses RNA(n+1) + phosphate = RNA(n) + a ribonucleoside 5'-diphosphate. In terms of biological role, involved in mRNA degradation. Catalyzes the phosphorolysis of single-stranded polyribonucleotides processively in the 3'- to 5'-direction. The polypeptide is Polyribonucleotide nucleotidyltransferase (Azobacteroides pseudotrichonymphae genomovar. CFP2).